The sequence spans 475 residues: Protein transport protein Sec61 subunit alpha (475 aa).

Topologically, residues 1–32 (MGFRFLDIVKPFTSLVPEVGQPDRKIPFREKV) are cytoplasmic. A helical transmembrane segment spans residues 33-53 (LWTAICLFIFLVCSQIPLYGI). Over 54–75 (RSTDSSDPFYWAKVIMASNRGT) the chain is Lumenal. A helical transmembrane segment spans residues 76–96 (LMELGISPIVTSGMVMQLLAG). Topologically, residues 97–118 (AKLIEIDQSVKADRDLFSAAQK) are cytoplasmic. A helical membrane pass occupies residues 119-139 (LFGMLICVGQGVAYIWSGSYG). The Lumenal segment spans residues 140-145 (DPAVLG). Residues 146 to 166 (FGNCFLIVLQLFFAGIIVMLL) traverse the membrane as a helical segment. At 167–173 (DELLQKG) the chain is on the cytoplasmic side. Residues 174–194 (YGIGSGISLFIATNICETIVW) traverse the membrane as a helical segment. Residues 195 to 241 (KTFSPTTVSVGKGTEFEGAVIALFHLLLTRNDKVRALKEAFYRQNLP) lie on the Lumenal side of the membrane. The chain crosses the membrane as a helical span at residues 242–262 (NITNLLATVLIFMVVIYFQGF). The Cytoplasmic portion of the chain corresponds to 263 to 289 (RVDLPVKSTRVSGQQGTYPIKLFYTSN). Residues 290-310 (IPIILQSALVSNLYFISQLLY) traverse the membrane as a helical segment. At 311–353 (RRFPDNILVNLFGAWRTSEYSQQMIPVSGLTYYISSPNNMSAV) the chain is on the lumenal side. The chain crosses the membrane as a helical span at residues 354–374 (LADPFHALFYITFMLTSCALF). The Cytoplasmic segment spans residues 375-411 (SKVWIEVSGSSARDVAKQLKDQQMTMKGHRDTSVIKE). The chain crosses the membrane as a helical span at residues 412–434 (LNRYIPTAAAFGGLCIGALTVVA). The Lumenal portion of the chain corresponds to 435 to 440 (DFMGAI). A helical membrane pass occupies residues 441–461 (GSGTGILLAVTIIYQYFETFV). At 462-475 (KEQQELSGGIGGLF) the chain is on the cytoplasmic side.

Belongs to the SecY/SEC61-alpha family. Heterotrimeric complex composed of SEC61-alpha, SEC61-beta and SEC61-gamma.

Its subcellular location is the endoplasmic reticulum membrane. Functionally, appears to play a crucial role in the insertion of secretory and membrane polypeptides into the ER. It is required for assembly of membrane and secretory proteins. Found to be tightly associated with membrane-bound ribosomes, either directly or through adaptor proteins. This Dictyostelium discoideum (Social amoeba) protein is Protein transport protein Sec61 subunit alpha (sec61a).